The primary structure comprises 513 residues: ATP synthase subunit alpha (513 aa).

169–176 (GDRQTGKT) contributes to the ATP binding site.

It belongs to the ATPase alpha/beta chains family. As to quaternary structure, F-type ATPases have 2 components, CF(1) - the catalytic core - and CF(0) - the membrane proton channel. CF(1) has five subunits: alpha(3), beta(3), gamma(1), delta(1), epsilon(1). CF(0) has three main subunits: a(1), b(2) and c(9-12). The alpha and beta chains form an alternating ring which encloses part of the gamma chain. CF(1) is attached to CF(0) by a central stalk formed by the gamma and epsilon chains, while a peripheral stalk is formed by the delta and b chains.

It localises to the cell inner membrane. It carries out the reaction ATP + H2O + 4 H(+)(in) = ADP + phosphate + 5 H(+)(out). Functionally, produces ATP from ADP in the presence of a proton gradient across the membrane. The alpha chain is a regulatory subunit. The polypeptide is ATP synthase subunit alpha (Methylobacillus flagellatus (strain ATCC 51484 / DSM 6875 / VKM B-1610 / KT)).